Consider the following 473-residue polypeptide: Ribulose bisphosphate carboxylase large chain 2 (473 aa).

2 residues coordinate substrate: Asn116 and Thr166. Lys168 acts as the Proton acceptor in catalysis. Lys170 serves as a coordination point for substrate. The Mg(2+) site is built by Lys194, Asp196, and Glu197. Residue Lys194 is modified to N6-carboxylysine. The Proton acceptor role is filled by His287. Residues Arg288, His320, and Ser372 each contribute to the substrate site.

Belongs to the RuBisCO large chain family. Type I subfamily. Heterohexadecamer of 8 large chains and 8 small chains. The cofactor is Mg(2+).

It carries out the reaction 2 (2R)-3-phosphoglycerate + 2 H(+) = D-ribulose 1,5-bisphosphate + CO2 + H2O. It catalyses the reaction D-ribulose 1,5-bisphosphate + O2 = 2-phosphoglycolate + (2R)-3-phosphoglycerate + 2 H(+). Its function is as follows. RuBisCO catalyzes two reactions: the carboxylation of D-ribulose 1,5-bisphosphate, the primary event in carbon dioxide fixation, as well as the oxidative fragmentation of the pentose substrate. Both reactions occur simultaneously and in competition at the same active site. This Acidithiobacillus ferrooxidans (strain ATCC 23270 / DSM 14882 / CIP 104768 / NCIMB 8455) (Ferrobacillus ferrooxidans (strain ATCC 23270)) protein is Ribulose bisphosphate carboxylase large chain 2.